Reading from the N-terminus, the 374-residue chain is Queuine tRNA-ribosyltransferase (374 aa).

The active-site Proton acceptor is Asp-94. Substrate-binding positions include 94–98, Asp-148, Gln-191, and Gly-218; that span reads DSGGF. Residues 249-255 form an RNA binding region; it reads GVGSPDY. The Nucleophile role is filled by Asp-268. An RNA binding; important for wobble base 34 recognition region spans residues 273–277; the sequence is TRIGR. Cys-306, Cys-308, Cys-311, and His-337 together coordinate Zn(2+).

The protein belongs to the queuine tRNA-ribosyltransferase family. As to quaternary structure, homodimer. Within each dimer, one monomer is responsible for RNA recognition and catalysis, while the other monomer binds to the replacement base PreQ1. Requires Zn(2+) as cofactor.

It catalyses the reaction 7-aminomethyl-7-carbaguanine + guanosine(34) in tRNA = 7-aminomethyl-7-carbaguanosine(34) in tRNA + guanine. Its pathway is tRNA modification; tRNA-queuosine biosynthesis. Functionally, catalyzes the base-exchange of a guanine (G) residue with the queuine precursor 7-aminomethyl-7-deazaguanine (PreQ1) at position 34 (anticodon wobble position) in tRNAs with GU(N) anticodons (tRNA-Asp, -Asn, -His and -Tyr). Catalysis occurs through a double-displacement mechanism. The nucleophile active site attacks the C1' of nucleotide 34 to detach the guanine base from the RNA, forming a covalent enzyme-RNA intermediate. The proton acceptor active site deprotonates the incoming PreQ1, allowing a nucleophilic attack on the C1' of the ribose to form the product. After dissociation, two additional enzymatic reactions on the tRNA convert PreQ1 to queuine (Q), resulting in the hypermodified nucleoside queuosine (7-(((4,5-cis-dihydroxy-2-cyclopenten-1-yl)amino)methyl)-7-deazaguanosine). The chain is Queuine tRNA-ribosyltransferase from Acetivibrio thermocellus (strain ATCC 27405 / DSM 1237 / JCM 9322 / NBRC 103400 / NCIMB 10682 / NRRL B-4536 / VPI 7372) (Clostridium thermocellum).